We begin with the raw amino-acid sequence, 330 residues long: Probable transposase for insertion sequence element ISH11 (330 aa).

Belongs to the transposase 11 family.

In terms of biological role, involved in the transposition of the insertion sequence ISH11. This chain is Probable transposase for insertion sequence element ISH11, found in Halobacterium salinarum (strain ATCC 29341 / DSM 671 / R1).